We begin with the raw amino-acid sequence, 439 residues long: Xylose isomerase (439 aa).

Active-site residues include His101 and Asp104. Glu232, Glu268, His271, Asp296, Asp307, Asp309, and Asp339 together coordinate Mg(2+).

The protein belongs to the xylose isomerase family. As to quaternary structure, homotetramer. Requires Mg(2+) as cofactor.

Its subcellular location is the cytoplasm. It carries out the reaction alpha-D-xylose = alpha-D-xylulofuranose. This chain is Xylose isomerase, found in Photobacterium profundum (strain SS9).